A 327-amino-acid chain; its full sequence is Zinc transport protein ZntB (327 aa).

The Cytoplasmic segment spans residues 1–273 (MEAIKGSDVN…ARRTYTMSLM (273 aa)). Residues 274–294 (AMVFLPSTFLTGLFGVNLGGI) form a helical membrane-spanning segment. Residues 295-300 (PGGGWQ) are Periplasmic-facing. The chain crosses the membrane as a helical span at residues 301–321 (FGFSIFCILLVVLIGGVALWL). Residues 322–327 (HRSKWL) are Cytoplasmic-facing.

It belongs to the CorA metal ion transporter (MIT) (TC 1.A.35) family.

Its subcellular location is the cell inner membrane. It carries out the reaction Zn(2+)(out) + H(+)(out) = Zn(2+)(in) + H(+)(in). Its function is as follows. Zinc transporter. Acts as a Zn(2+):proton symporter, which likely mediates zinc ion uptake. The polypeptide is Zinc transport protein ZntB (Escherichia coli O8 (strain IAI1)).